Reading from the N-terminus, the 294-residue chain is Secreted frizzled-related protein 2 (294 aa).

A signal peptide spans Met1–Gly24. The FZ domain occupies Tyr34–Leu154. Disulfide bonds link Cys39–Cys102, Cys49–Cys95, Cys86–Cys124, Cys113–Cys151, Cys117–Cys141, Cys171–Cys244, Cys174–Cys246, and Cys189–Cys294. One can recognise an NTR domain in the interval Cys171–Cys294.

It belongs to the secreted frizzled-related protein (sFRP) family.

It localises to the secreted. In terms of biological role, soluble frizzled-related proteins (sFRPS) function as modulators of Wnt signaling through direct interaction with Wnts. They have a role in regulating cell growth and differentiation in specific cell types. SFRP2 may be important for eye retinal development and for myogenesis. This is Secreted frizzled-related protein 2 (SFRP2) from Canis lupus familiaris (Dog).